A 420-amino-acid polypeptide reads, in one-letter code: ATP phosphoribosyltransferase regulatory subunit (420 aa).

It belongs to the class-II aminoacyl-tRNA synthetase family. HisZ subfamily. In terms of assembly, heteromultimer composed of HisG and HisZ subunits.

The protein resides in the cytoplasm. It participates in amino-acid biosynthesis; L-histidine biosynthesis; L-histidine from 5-phospho-alpha-D-ribose 1-diphosphate: step 1/9. In terms of biological role, required for the first step of histidine biosynthesis. May allow the feedback regulation of ATP phosphoribosyltransferase activity by histidine. This is ATP phosphoribosyltransferase regulatory subunit from Bacillus cereus (strain ATCC 10987 / NRS 248).